The chain runs to 307 residues: Elongation factor Ts (307 aa).

The tract at residues 80 to 83 is involved in Mg(2+) ion dislocation from EF-Tu; the sequence is TDFV.

The protein belongs to the EF-Ts family.

The protein localises to the cytoplasm. Its function is as follows. Associates with the EF-Tu.GDP complex and induces the exchange of GDP to GTP. It remains bound to the aminoacyl-tRNA.EF-Tu.GTP complex up to the GTP hydrolysis stage on the ribosome. This is Elongation factor Ts from Bradyrhizobium sp. (strain ORS 278).